Consider the following 328-residue polypeptide: Testis-specific serine/threonine-protein kinase 4 (328 aa).

The region spanning Y25 to V293 is the Protein kinase domain. Residues I31 to V39 and K54 contribute to the ATP site. Catalysis depends on D148, which acts as the Proton acceptor. T197 carries the post-translational modification Phosphothreonine.

This sequence belongs to the protein kinase superfamily. CAMK Ser/Thr protein kinase family. As to quaternary structure, homodimer. Interacts with HSP90; this interaction stabilizes and activates TSSK4. Interacts with ODF2 (via C-terminus); this interaction promotes ODF2 phosphorylation on 'Ser-95'. May interact with CREM. Interacts with CREB1; this interaction facilitates phosphorylation on 'Ser-133'. Interacts with QRICH2. Mg(2+) serves as cofactor. Post-translationally, activated by autophosphorylation on Thr-197. ODF2 potentiates the autophosphorylation activity of TSSK4 at Thr-197. Ubiquitinated; HSP90 activity negatively regulates ubiquitination and degradation. In terms of tissue distribution, expressed only in the testis.

The protein resides in the cytoplasmic vesicle. It is found in the secretory vesicle. Its subcellular location is the acrosome. It localises to the cell projection. The protein localises to the cilium. The protein resides in the flagellum. The catalysed reaction is L-seryl-[protein] + ATP = O-phospho-L-seryl-[protein] + ADP + H(+). The enzyme catalyses L-threonyl-[protein] + ATP = O-phospho-L-threonyl-[protein] + ADP + H(+). Activated by phosphorylation on Thr-197. Serine/threonine kinase which is involved in male germ cell development and in mature sperm function. May be involved in the Cre/Creb signaling pathway. Phosphorylates CREB1 on 'Ser-133' in vitro and can stimulate Cre/Creb pathway in cells. Phosphorylates CREM on 'Ser-116' in vitro. Phosphorylates ODF2 on 'Ser-95'. This is Testis-specific serine/threonine-protein kinase 4 from Homo sapiens (Human).